A 420-amino-acid chain; its full sequence is Serine/threonine-protein phosphatase 4 regulatory subunit 2-A (420 aa).

The disordered stretch occupies residues 157–420; sequence GNTSAFPDRN…ETADDNMEQD (264 aa). The span at 182-195 shows a compositional bias: polar residues; it reads SLSSNVATNGLPDS. A compositionally biased stretch (basic and acidic residues) spans 196–210; the sequence is TESKEQASEQSERTV. Over residues 212–224 the composition is skewed to low complexity; sequence ESSASEAESHSGA. Over residues 229 to 250 the composition is skewed to basic and acidic residues; that stretch reads HRDDEDATHAETHEAKRLKFDK. Residues 251 to 266 show a composition bias toward acidic residues; that stretch reads EEEEEEDDEEEDEDGD. A compositionally biased stretch (basic and acidic residues) spans 267–276; that stretch reads EIKKELDEPH. The segment covering 278–296 has biased composition (polar residues); that stretch reads PCTSVAESSSDVPQSSTDV. Positions 318–332 are enriched in basic and acidic residues; that stretch reads GVDRSTSEDSPDPSH. A compositionally biased stretch (acidic residues) spans 346-364; that stretch reads AEEEEEEESAEAQETEETN. Positions 368–394 are enriched in low complexity; it reads SSSSNNSSDEGVSSAETPSASPSSSTE. The segment covering 411–420 has biased composition (acidic residues); the sequence is ETADDNMEQD.

The protein belongs to the PPP4R2 family. In terms of assembly, serine/threonine-protein phosphatase 4 (PP4) occurs in different assemblies of the catalytic and one or more regulatory subunits.

Functionally, regulatory subunit of serine/threonine-protein phosphatase 4 (PP4C). This chain is Serine/threonine-protein phosphatase 4 regulatory subunit 2-A (ppp4r2a), found in Danio rerio (Zebrafish).